Reading from the N-terminus, the 329-residue chain is Phosphate import ATP-binding protein PstB (329 aa).

Positions 83 to 325 (FEIRNFNFWY…PKQKATNSYI (243 aa)) constitute an ABC transporter domain. Residue 116 to 123 (GKSGCGKS) coordinates ATP.

The protein belongs to the ABC transporter superfamily. Phosphate importer (TC 3.A.1.7) family. The complex is composed of two ATP-binding proteins (PstB), two transmembrane proteins (PstC and PstA) and a solute-binding protein (PstS).

It localises to the cell membrane. The enzyme catalyses phosphate(out) + ATP + H2O = ADP + 2 phosphate(in) + H(+). Part of the ABC transporter complex PstSACB involved in phosphate import. Responsible for energy coupling to the transport system. The chain is Phosphate import ATP-binding protein PstB from Mycoplasma genitalium (strain ATCC 33530 / DSM 19775 / NCTC 10195 / G37) (Mycoplasmoides genitalium).